Consider the following 361-residue polypeptide: Anthranilate phosphoribosyltransferase (361 aa).

Residues glycine 80, 83–84, threonine 88, 90–93, 108–116, and serine 120 each bind 5-phospho-alpha-D-ribose 1-diphosphate; these read GD, NVST, and KHGNYSVSS. An anthranilate-binding site is contributed by glycine 80. Position 92 (serine 92) interacts with Mg(2+). Anthranilate is bound at residue asparagine 111. Residue arginine 166 coordinates anthranilate. Residues aspartate 224 and glutamate 225 each coordinate Mg(2+). The interval 338-361 is disordered; sequence EGDGEAASTDSAAASTTAGPEDDD. Positions 343–355 are enriched in low complexity; it reads AASTDSAAASTTA.

It belongs to the anthranilate phosphoribosyltransferase family. As to quaternary structure, homodimer. Mg(2+) is required as a cofactor.

The catalysed reaction is N-(5-phospho-beta-D-ribosyl)anthranilate + diphosphate = 5-phospho-alpha-D-ribose 1-diphosphate + anthranilate. It participates in amino-acid biosynthesis; L-tryptophan biosynthesis; L-tryptophan from chorismate: step 2/5. In terms of biological role, catalyzes the transfer of the phosphoribosyl group of 5-phosphorylribose-1-pyrophosphate (PRPP) to anthranilate to yield N-(5'-phosphoribosyl)-anthranilate (PRA). In Halorubrum lacusprofundi (strain ATCC 49239 / DSM 5036 / JCM 8891 / ACAM 34), this protein is Anthranilate phosphoribosyltransferase.